The following is a 503-amino-acid chain: Arabinose import ATP-binding protein AraG 1 (503 aa).

ABC transporter domains follow at residues 5–240 and 253–497; these read LRFD…MVGR and LGDV…LPQG. Position 37 to 44 (37 to 44) interacts with ATP; the sequence is GENGAGKS.

It belongs to the ABC transporter superfamily. Arabinose importer (TC 3.A.1.2.2) family. The complex is composed of two ATP-binding proteins (AraG), two transmembrane proteins (AraH) and a solute-binding protein (AraF).

Its subcellular location is the cell inner membrane. The enzyme catalyses L-arabinose(out) + ATP + H2O = L-arabinose(in) + ADP + phosphate + H(+). Its function is as follows. Part of the ABC transporter complex AraFGH involved in arabinose import. Responsible for energy coupling to the transport system. This is Arabinose import ATP-binding protein AraG 1 from Burkholderia thailandensis (strain ATCC 700388 / DSM 13276 / CCUG 48851 / CIP 106301 / E264).